Reading from the N-terminus, the 633-residue chain is Mitochondrial Rho GTPase 1 (633 aa).

A Miro 1 domain is found at 1–170 (MATVRICVCG…FFLCQKAVTH (170 aa)). Topologically, residues 1-603 (MATVRICVCG…PRSEEDVEGK (603 aa)) are cytoplasmic. GTP contacts are provided by residues 10-17 (GDEGTGKS), 59-63 (DTSAL), and 115-118 (NKSD). EF-hand domains are found at residues 186 to 221 (AAVA…CFEK) and 306 to 341 (EGYR…TPGL). The Ca(2+) site is built by Asp199, Asp201, Asp203, Tyr205, Glu210, Asp319, Asp321, Asp323, and Glu330. The disordered stretch occupies residues 398–418 (NPSTTAALKVTRPRKRRKRPG). A compositionally biased stretch (basic residues) spans 408-418 (TRPRKRRKRPG). The Miro 2 domain occupies 422–588 (RNVVLGHVLG…FVHIAEAAME (167 aa)). GTP contacts are provided by residues 431-438 (GPPGSGKS), 467-471 (ELPGG), and 537-540 (LKAD). The chain crosses the membrane as a helical; Anchor for type IV membrane protein span at residues 604 to 624 (WMAWGIALGAVVCAGAAAVMI). Over 625–633 (WRRVSGSGT) the chain is Mitochondrial intermembrane.

This sequence belongs to the mitochondrial Rho GTPase family.

Its subcellular location is the mitochondrion outer membrane. In terms of biological role, mitochondrial GTPase involved in mitochondrial trafficking. Probably involved in control of anterograde transport of mitochondria and their subcellular distribution. This Aspergillus oryzae (strain ATCC 42149 / RIB 40) (Yellow koji mold) protein is Mitochondrial Rho GTPase 1 (gem1).